We begin with the raw amino-acid sequence, 117 residues long: UPF0251 protein DehaBAV1_0135 (117 aa).

It belongs to the UPF0251 family.

In Dehalococcoides mccartyi (strain ATCC BAA-2100 / JCM 16839 / KCTC 5957 / BAV1), this protein is UPF0251 protein DehaBAV1_0135.